The following is a 217-amino-acid chain: Transmembrane protein 247 (217 aa).

Positions 1 to 10 are enriched in basic and acidic residues; sequence MATEDREMME. The segment at 1–87 is disordered; the sequence is MATEDREMME…GPATTKGQAG (87 aa). A coiled-coil region spans residues 109–154; sequence RERDAEMELEKVRMEFELKRLKYLHEENERQRQHEEVMEQLQQQAT. Transmembrane regions (helical) follow at residues 165 to 185 and 192 to 212; these read LLLPQNQFAMFLYCFIFIHII and IFFLFSKHYLFCIAAILLCLI.

Its subcellular location is the membrane. The chain is Transmembrane protein 247 from Bos taurus (Bovine).